Consider the following 523-residue polypeptide: Calcium uptake protein 3, mitochondrial (523 aa).

Residues 1–6 constitute a mitochondrion transit peptide; that stretch reads MAALRR. The disordered stretch occupies residues 18–48; the sequence is LAPQQPFLSPWGRPAGTAPGMSGRPFSGREE. The EF-hand 1 domain maps to 225-260; that stretch reads KPHAGFRIAFNMFDTDGNEMVDKKEFLVLQEIFRKK. Ca(2+)-binding residues include aspartate 238, aspartate 240, asparagine 242, methionine 244, aspartate 246, and glutamate 249. One can recognise an EF-hand 2; degenerate domain in the interval 414–429; sequence ITFDEFRSFFQFLNNL. Residues 463–498 form the EF-hand 3 domain; the sequence is LSPHLVNTVFKIFDVDKDDQLSYKEFIGIMKDRLHR. The Ca(2+) site is built by aspartate 476, aspartate 478, aspartate 480, glutamine 482, and glutamate 487.

Belongs to the MICU1 family. MICU3 subfamily. As to quaternary structure, heterodimer; disulfide-linked; heterodimerizes with MICU1. Component of the uniplex complex, composed of MCU, EMRE/SMDT1, MICU1 and MICU3 in a 4:4:1:1 stoichiometry.

It localises to the mitochondrion intermembrane space. It is found in the mitochondrion inner membrane. Functionally, tissue-specific calcium sensor of the mitochondrial calcium uniporter (MCU) channel, which specifically regulates MCU channel activity in the central nervous system and skeletal muscle. Senses calcium level via its EF-hand domains: compared to MICU1 and MICU2, MICU3 has a higher affinity for calcium. MICU1 and MICU3 form a disulfide-linked heterodimer that stimulates and inhibits MCU activity, depending on the concentration of calcium. At low calcium levels, MICU1 occludes the pore of the MCU channel, preventing mitochondrial calcium uptake. At higher calcium levels, calcium-binding to MICU1 and MICU3 induces a conformational change that weakens MCU-MICU1 interactions and moves the MICU1-MICU3 heterodimer away from the pore, allowing calcium permeation through the MCU channel. The high calcium affinity of MICU3 lowers the calcium threshold necessary for calcium permeation through the MCU channel. The MICU1-MICU3 heterodimer promotes flexibility of neurotransmission in neuronal cells by enhancing mitochondrial calcium uptake in presynapses. It is also required to increase mitochondrial calcium uptake in skeletal muscle cells, thereby increasing ATP production. The sequence is that of Calcium uptake protein 3, mitochondrial from Rattus norvegicus (Rat).